Reading from the N-terminus, the 1179-residue chain is RecBCD enzyme subunit RecB (1179 aa).

The tract at residues 1–859 (MVYSDTKTSK…IIQNGKCMNY (859 aa)) is DNA-binding and helicase activity, interacts with RecC. One can recognise a UvrD-like helicase ATP-binding domain in the interval 18–459 (NIMKKKLNIF…YYLDTNWRSS (442 aa)). 39–46 (ASAGTGKT) provides a ligand contact to ATP. In terms of domain architecture, UvrD-like helicase C-terminal spans 485 to 755 (EPILSSSKNL…RIITIHKSKG (271 aa)). Residues 910–1179 (YSQITSFTKI…KLTKLILQKK (270 aa)) are nuclease activity, interacts with RecD and RecA. The Mg(2+) site is built by histidine 962, aspartate 1073, and aspartate 1086. The active-site For nuclease activity is the aspartate 1086.

The protein belongs to the helicase family. UvrD subfamily. As to quaternary structure, heterotrimer of RecB, RecC and RecD. All subunits contribute to DNA-binding. Interacts with RecA. It depends on Mg(2+) as a cofactor.

The catalysed reaction is Exonucleolytic cleavage (in the presence of ATP) in either 5'- to 3'- or 3'- to 5'-direction to yield 5'-phosphooligonucleotides.. It catalyses the reaction Couples ATP hydrolysis with the unwinding of duplex DNA by translocating in the 3'-5' direction.. It carries out the reaction ATP + H2O = ADP + phosphate + H(+). Functionally, a helicase/nuclease that prepares dsDNA breaks (DSB) for recombinational DNA repair. Binds to DSBs and unwinds DNA via a highly rapid and processive ATP-dependent bidirectional helicase activity. Unwinds dsDNA until it encounters a Chi (crossover hotspot instigator) sequence from the 3' direction. Cuts ssDNA a few nucleotides 3' to the Chi site. The properties and activities of the enzyme are changed at Chi. The Chi-altered holoenzyme produces a long 3'-ssDNA overhang and facilitates RecA-binding to the ssDNA for homologous DNA recombination and repair. Holoenzyme degrades any linearized DNA that is unable to undergo homologous recombination. In the holoenzyme this subunit contributes ATPase, 3'-5' helicase, exonuclease activity and loads RecA onto ssDNA. In Buchnera aphidicola subsp. Schizaphis graminum (strain Sg), this protein is RecBCD enzyme subunit RecB.